Consider the following 94-residue polypeptide: U27-theraphotoxin-Cg1a (94 aa).

Positions 1–22 (MIFLLPPVIFVMLLAESVLILG) are cleaved as a signal peptide. Positions 23 to 58 (DSEDADLMEMVQMSRPFFNPIIPAVEFVDLREERQR) are excised as a propeptide. 3 disulfides stabilise this stretch: Cys-60–Cys-78, Cys-67–Cys-83, and Cys-77–Cys-88.

This sequence belongs to the neurotoxin 14 (magi-1) family. OAIP-1 subfamily. In terms of tissue distribution, expressed by the venom gland.

Its subcellular location is the secreted. Probable ion channel inhibitor. The polypeptide is U27-theraphotoxin-Cg1a (Chilobrachys guangxiensis (Chinese earth tiger tarantula)).